The primary structure comprises 71 residues: Brevinin-1SN2 (71 aa).

Positions 1-22 (MFTMKKSLLLIFFLGTINLSLC) are cleaved as a signal peptide. The propeptide at 23–45 (EEERNADEDEKRDGDDESDVEVQ) is removed in mature form. An intrachain disulfide couples cysteine 65 to cysteine 71.

This sequence belongs to the frog skin active peptide (FSAP) family. Brevinin subfamily. As to expression, expressed by the skin glands.

The protein resides in the secreted. Functionally, antimicrobial peptide. Active against a variety of Gram-negative and Gram-positive bacterial strains. Active against fungus C.glabrata 090902 and C.albicans ATCC 10231. Shows hemolytic activity against human erythrocytes. The sequence is that of Brevinin-1SN2 from Sylvirana spinulosa (Fine-spined frog).